Consider the following 94-residue polypeptide: Large ribosomal subunit protein eL42 (94 aa).

Residues cysteine 11, cysteine 14, cysteine 71, and cysteine 74 each coordinate Zn(2+). Residues 11-74 (CPFCKRHTIH…LDLRFRCTVC (64 aa)) form a C4-type zinc finger.

Belongs to the eukaryotic ribosomal protein eL42 family. As to quaternary structure, part of the 50S ribosomal subunit. It depends on Zn(2+) as a cofactor.

Its function is as follows. Binds to the 23S rRNA. The polypeptide is Large ribosomal subunit protein eL42 (Pyrococcus abyssi (strain GE5 / Orsay)).